The chain runs to 146 residues: Prefoldin subunit alpha 1 (146 aa).

Belongs to the prefoldin subunit alpha family. Heterohexamer of two alpha and four beta subunits.

It is found in the cytoplasm. Its function is as follows. Molecular chaperone capable of stabilizing a range of proteins. Seems to fulfill an ATP-independent, HSP70-like function in archaeal de novo protein folding. The protein is Prefoldin subunit alpha 1 of Thermococcus kodakarensis (strain ATCC BAA-918 / JCM 12380 / KOD1) (Pyrococcus kodakaraensis (strain KOD1)).